Reading from the N-terminus, the 420-residue chain is Tyrosine--tRNA ligase (420 aa).

L-tyrosine is bound at residue tyrosine 38. The short motif at proline 43–histidine 52 is the 'HIGH' region element. L-tyrosine is bound by residues tyrosine 169 and glutamine 173. Positions lysine 231–serine 235 match the 'KMSKS' region motif. Position 234 (lysine 234) interacts with ATP. An S4 RNA-binding domain is found at lysine 353–isoleucine 419.

The protein belongs to the class-I aminoacyl-tRNA synthetase family. TyrS type 1 subfamily. Homodimer.

It is found in the cytoplasm. The enzyme catalyses tRNA(Tyr) + L-tyrosine + ATP = L-tyrosyl-tRNA(Tyr) + AMP + diphosphate + H(+). In terms of biological role, catalyzes the attachment of tyrosine to tRNA(Tyr) in a two-step reaction: tyrosine is first activated by ATP to form Tyr-AMP and then transferred to the acceptor end of tRNA(Tyr). In Lactobacillus acidophilus (strain ATCC 700396 / NCK56 / N2 / NCFM), this protein is Tyrosine--tRNA ligase.